Consider the following 761-residue polypeptide: Ribonucleoside-diphosphate reductase subunit alpha (761 aa).

The 91-residue stretch at 5–95 folds into the ATP-cone domain; that stretch reads LFVTKRNGKI…IFHLRKKAFG (91 aa). ATP contacts are provided by residues Lys9, 15–21, Thr55, and Lys91; that span reads ELINLDK. Thr209 contributes to the GDP binding site. Cys225 and Cys462 are disulfide-bonded. Residues 232–234, Arg262, and Arg269 each bind dTTP; that span reads DNL. Residue Asn437 participates in GDP binding. Asn437 serves as the catalytic Proton acceptor. The active-site Cysteine radical intermediate is the Cys439. Residues Glu441 and 623–625 contribute to the GDP site; that span reads ETS. The Proton acceptor role is filled by Glu441.

Belongs to the ribonucleoside diphosphate reductase large chain family. Tetramer of two alpha and two beta subunits.

It carries out the reaction a 2'-deoxyribonucleoside 5'-diphosphate + [thioredoxin]-disulfide + H2O = a ribonucleoside 5'-diphosphate + [thioredoxin]-dithiol. With respect to regulation, under complex allosteric control mediated by deoxynucleoside triphosphates and ATP binding to separate specificity and activation sites on the alpha subunit. The type of nucleotide bound at the specificity site determines substrate preference. It seems probable that ATP makes the enzyme reduce CDP and UDP, dGTP favors ADP reduction and dTTP favors GDP reduction. Stimulated by ATP and inhibited by dATP binding to the activity site. Functionally, provides the precursors necessary for DNA synthesis. Catalyzes the biosynthesis of deoxyribonucleotides from the corresponding ribonucleotides. In Buchnera aphidicola subsp. Baizongia pistaciae (strain Bp), this protein is Ribonucleoside-diphosphate reductase subunit alpha (nrdA).